A 699-amino-acid polypeptide reads, in one-letter code: Elongation factor G 1 (699 aa).

The tr-type G domain occupies 8–290 (EHYRNIGICA…AVIEFLPSPS (283 aa)). GTP is bound by residues 17 to 24 (AHVDAGKT), 88 to 92 (DTPGH), and 142 to 145 (NKMD).

Belongs to the TRAFAC class translation factor GTPase superfamily. Classic translation factor GTPase family. EF-G/EF-2 subfamily.

It is found in the cytoplasm. In terms of biological role, catalyzes the GTP-dependent ribosomal translocation step during translation elongation. During this step, the ribosome changes from the pre-translocational (PRE) to the post-translocational (POST) state as the newly formed A-site-bound peptidyl-tRNA and P-site-bound deacylated tRNA move to the P and E sites, respectively. Catalyzes the coordinated movement of the two tRNA molecules, the mRNA and conformational changes in the ribosome. This chain is Elongation factor G 1, found in Vibrio parahaemolyticus serotype O3:K6 (strain RIMD 2210633).